Consider the following 381-residue polypeptide: 3-isopropylmalate dehydrogenase (381 aa).

Arginine 104, arginine 114, arginine 142, and aspartate 232 together coordinate substrate. 3 residues coordinate Mg(2+): aspartate 232, aspartate 256, and aspartate 260. Residue 290–302 (GSAPDIAGQDKAN) participates in NAD(+) binding.

It belongs to the isocitrate and isopropylmalate dehydrogenases family. LeuB type 1 subfamily. Homodimer. It depends on Mg(2+) as a cofactor. Mn(2+) is required as a cofactor.

The protein localises to the cytoplasm. The catalysed reaction is (2R,3S)-3-isopropylmalate + NAD(+) = 4-methyl-2-oxopentanoate + CO2 + NADH. Its pathway is amino-acid biosynthesis; L-leucine biosynthesis; L-leucine from 3-methyl-2-oxobutanoate: step 3/4. Its function is as follows. Catalyzes the oxidation of 3-carboxy-2-hydroxy-4-methylpentanoate (3-isopropylmalate) to 3-carboxy-4-methyl-2-oxopentanoate. The product decarboxylates to 4-methyl-2 oxopentanoate. This Synechococcus sp. (strain JA-3-3Ab) (Cyanobacteria bacterium Yellowstone A-Prime) protein is 3-isopropylmalate dehydrogenase.